The primary structure comprises 396 residues: Elongation factor Tu (396 aa).

The tr-type G domain occupies 10 to 205 (KEHVNIGTIG…AVDNYIETPV (196 aa)). Residues 19-26 (GHVDHGKT) are G1. 19-26 (GHVDHGKT) contacts GTP. Thr26 lines the Mg(2+) pocket. Residues 60-64 (GITIN) are G2. The segment at 81–84 (DCPG) is G3. GTP contacts are provided by residues 81 to 85 (DCPGH) and 136 to 139 (NKVD). Residues 136–139 (NKVD) form a G4 region. Positions 175 to 177 (SAL) are G5.

It belongs to the TRAFAC class translation factor GTPase superfamily. Classic translation factor GTPase family. EF-Tu/EF-1A subfamily. As to quaternary structure, monomer.

The protein localises to the cytoplasm. It catalyses the reaction GTP + H2O = GDP + phosphate + H(+). Its function is as follows. GTP hydrolase that promotes the GTP-dependent binding of aminoacyl-tRNA to the A-site of ribosomes during protein biosynthesis. In Mycoplasmopsis pulmonis (strain UAB CTIP) (Mycoplasma pulmonis), this protein is Elongation factor Tu.